A 418-amino-acid polypeptide reads, in one-letter code: Equilibrative nucleotide transporter 3 (418 aa).

11 helical membrane passes run 20 to 40 (MVVC…MLTI), 56 to 76 (VLTL…AYHE), 86 to 106 (LIGY…DLAT), 112 to 132 (IGPY…DATV), 142 to 162 (LMCP…GALT), 186 to 206 (MFLA…AYVF), 264 to 284 (YAVN…GFLY), 291 to 311 (GLGD…DLVG), 326 to 346 (KLIT…YFTA), 353 to 373 (WMIM…VCIM), and 392 to 412 (LVIF…LWLI).

Belongs to the SLC29A/ENT transporter (TC 2.A.57) family. Expressed in root tips, vasculature of roots and leaves, and meristems of leaf primordia. Expressed in flowers and siliques.

The protein localises to the cell membrane. Its function is as follows. Nucleoside transporter that functions as a pyrimidine nucleoside carrier in all organs. Has high affinity for adenosine and uridine when expressed in a heterologous system (yeast). Mediates proton-dependent adenosine or uridine transport in Xenopus oocytes. The polypeptide is Equilibrative nucleotide transporter 3 (Arabidopsis thaliana (Mouse-ear cress)).